The following is a 219-amino-acid chain: Regulator of rDNA transcription 14 (219 aa).

Over residues 153 to 176 (EVRRRKSYRDEEREEAEFRSEVEK) the composition is skewed to basic and acidic residues. The tract at residues 153–219 (EVRRRKSYRD…KEEEEDQFSE (67 aa)) is disordered. A compositionally biased stretch (acidic residues) spans 194–219 (SDDEDDEEEDESDGFDKEEEEDQFSE).

Belongs to the RRT14 family.

Its subcellular location is the nucleus. It localises to the nucleolus. Functionally, involved in ribosome biogenesis, probably through modulation of rDNA transcription. The chain is Regulator of rDNA transcription 14 (RRT14) from Komagataella phaffii (strain GS115 / ATCC 20864) (Yeast).